Here is a 657-residue protein sequence, read N- to C-terminus: Translation factor GUF1, mitochondrial (657 aa).

The transit peptide at 1–39 (MRGCLQSVKWLTSALRPSQSLASSTRYPRRLLSTSAPRN) directs the protein to the mitochondrion. Residues 59–239 (ERFRNFCIVA…TVIEQIPAPV (181 aa)) form the tr-type G domain. Residues 121–128 (HQGEDYLL), 185–189 (INKVD), and 239–242 (VGDR) each bind GTP.

The protein belongs to the TRAFAC class translation factor GTPase superfamily. Classic translation factor GTPase family. LepA subfamily.

It is found in the mitochondrion inner membrane. The enzyme catalyses GTP + H2O = GDP + phosphate + H(+). Promotes mitochondrial protein synthesis. May act as a fidelity factor of the translation reaction, by catalyzing a one-codon backward translocation of tRNAs on improperly translocated ribosomes. Binds to mitochondrial ribosomes in a GTP-dependent manner. In Ajellomyces capsulatus (strain H143) (Darling's disease fungus), this protein is Translation factor GUF1, mitochondrial.